The following is a 248-amino-acid chain: 14-3-3 protein homolog 2 (248 aa).

This sequence belongs to the 14-3-3 family.

The chain is 14-3-3 protein homolog 2 from Echinococcus granulosus (Hydatid tapeworm).